A 621-amino-acid polypeptide reads, in one-letter code: tRNA uridine 5-carboxymethylaminomethyl modification enzyme MnmG (621 aa).

8 to 13 lines the FAD pocket; the sequence is GAGHAG. An NAD(+)-binding site is contributed by 269–283; it reads GPRYCPSVEDKIFRF.

This sequence belongs to the MnmG family. In terms of assembly, homodimer. Heterotetramer of two MnmE and two MnmG subunits. FAD serves as cofactor.

It is found in the cytoplasm. Functionally, NAD-binding protein involved in the addition of a carboxymethylaminomethyl (cmnm) group at the wobble position (U34) of certain tRNAs, forming tRNA-cmnm(5)s(2)U34. The sequence is that of tRNA uridine 5-carboxymethylaminomethyl modification enzyme MnmG from Chlorobium phaeobacteroides (strain DSM 266 / SMG 266 / 2430).